The sequence spans 566 residues: Transmembrane protein 151B (566 aa).

Residues 1–11 (MSPPGSAAGES) are compositionally biased toward low complexity. A disordered region spans residues 1 to 25 (MSPPGSAAGESAAGGGGGGGGPGVS). Over residues 12–23 (AAGGGGGGGGPG) the composition is skewed to gly residues. 2 helical membrane-spanning segments follow: residues 65-85 (CLLL…CHVT) and 112-132 (YVYI…VECW). Positions 495–512 (VNEASCPTEQTRLSSQAS) are enriched in polar residues. A disordered region spans residues 495–529 (VNEASCPTEQTRLSSQASMGDDEDDDEEEAGPPPP). Residues 514–524 (GDDEDDDEEEA) are compositionally biased toward acidic residues.

Belongs to the TMEM151 family.

Its subcellular location is the membrane. This is Transmembrane protein 151B (TMEM151B) from Homo sapiens (Human).